The sequence spans 212 residues: NAD(P)H-quinone oxidoreductase subunit K, chloroplastic (212 aa).

[4Fe-4S] cluster-binding residues include cysteine 43, cysteine 44, cysteine 108, and cysteine 139.

It belongs to the complex I 20 kDa subunit family. As to quaternary structure, NDH is composed of at least 16 different subunits, 5 of which are encoded in the nucleus. [4Fe-4S] cluster is required as a cofactor.

The protein localises to the plastid. Its subcellular location is the chloroplast thylakoid membrane. The enzyme catalyses a plastoquinone + NADH + (n+1) H(+)(in) = a plastoquinol + NAD(+) + n H(+)(out). It catalyses the reaction a plastoquinone + NADPH + (n+1) H(+)(in) = a plastoquinol + NADP(+) + n H(+)(out). In terms of biological role, NDH shuttles electrons from NAD(P)H:plastoquinone, via FMN and iron-sulfur (Fe-S) centers, to quinones in the photosynthetic chain and possibly in a chloroplast respiratory chain. The immediate electron acceptor for the enzyme in this species is believed to be plastoquinone. Couples the redox reaction to proton translocation, and thus conserves the redox energy in a proton gradient. In Phaseolus vulgaris (Kidney bean), this protein is NAD(P)H-quinone oxidoreductase subunit K, chloroplastic.